Consider the following 445-residue polypeptide: GTPase Der (445 aa).

2 EngA-type G domains span residues 3–167 (PVIA…YAGQ) and 180–353 (IKIA…AAAM). Residues 9–16 (GRPNVGKS), 56–60 (DTGGF), 119–122 (NKAE), 186–193 (GRPNVGKS), 233–237 (DTAGL), and 298–301 (NKWD) each bind GTP. One can recognise a KH-like domain in the interval 354-438 (AKLPTPKLTR…PLRIEFRSSN (85 aa)).

It belongs to the TRAFAC class TrmE-Era-EngA-EngB-Septin-like GTPase superfamily. EngA (Der) GTPase family. In terms of assembly, associates with the 50S ribosomal subunit.

Its function is as follows. GTPase that plays an essential role in the late steps of ribosome biogenesis. This Burkholderia cenocepacia (strain HI2424) protein is GTPase Der.